The primary structure comprises 291 residues: Formamidopyrimidine-DNA glycosylase (291 aa).

Residue Pro2 is the Schiff-base intermediate with DNA of the active site. The active-site Proton donor is the Glu3. The Proton donor; for beta-elimination activity role is filled by Lys58. 3 residues coordinate DNA: His100, Arg123, and Lys166. The segment at 257–291 (SVYGREGKECLHCGIPIVRILQSGRSSFYCSQCQK) adopts an FPG-type zinc-finger fold. The Proton donor; for delta-elimination activity role is filled by Arg281.

This sequence belongs to the FPG family. As to quaternary structure, monomer. Zn(2+) is required as a cofactor.

It catalyses the reaction Hydrolysis of DNA containing ring-opened 7-methylguanine residues, releasing 2,6-diamino-4-hydroxy-5-(N-methyl)formamidopyrimidine.. The catalysed reaction is 2'-deoxyribonucleotide-(2'-deoxyribose 5'-phosphate)-2'-deoxyribonucleotide-DNA = a 3'-end 2'-deoxyribonucleotide-(2,3-dehydro-2,3-deoxyribose 5'-phosphate)-DNA + a 5'-end 5'-phospho-2'-deoxyribonucleoside-DNA + H(+). In terms of biological role, involved in base excision repair of DNA damaged by oxidation or by mutagenic agents. Acts as a DNA glycosylase that recognizes and removes damaged bases. Has a preference for oxidized purines, such as 7,8-dihydro-8-oxoguanine (8-oxoG). Has AP (apurinic/apyrimidinic) lyase activity and introduces nicks in the DNA strand. Cleaves the DNA backbone by beta-delta elimination to generate a single-strand break at the site of the removed base with both 3'- and 5'-phosphates. The chain is Formamidopyrimidine-DNA glycosylase from Bartonella henselae (strain ATCC 49882 / DSM 28221 / CCUG 30454 / Houston 1) (Rochalimaea henselae).